Here is a 331-residue protein sequence, read N- to C-terminus: Holliday junction branch migration complex subunit RuvB (331 aa).

Residues 4-182 are large ATPase domain (RuvB-L); that stretch reads KDILQSSECI…FGIPMHLEFY (179 aa). ATP contacts are provided by residues Arg22, Gly63, Lys66, Thr67, Thr68, 129–131, Arg172, Tyr182, and Arg219; that span reads EDF. Thr67 lines the Mg(2+) pocket. Positions 183–253 are small ATPAse domain (RuvB-S); it reads STEELTKVIK…FADQALLRLG (71 aa). Positions 256–331 are head domain (RuvB-H); it reads KLGLDRQDIK…SYLNEQTYNM (76 aa). DNA is bound by residues Arg309 and Arg314.

It belongs to the RuvB family. In terms of assembly, homohexamer. Forms an RuvA(8)-RuvB(12)-Holliday junction (HJ) complex. HJ DNA is sandwiched between 2 RuvA tetramers; dsDNA enters through RuvA and exits via RuvB. An RuvB hexamer assembles on each DNA strand where it exits the tetramer. Each RuvB hexamer is contacted by two RuvA subunits (via domain III) on 2 adjacent RuvB subunits; this complex drives branch migration. In the full resolvosome a probable DNA-RuvA(4)-RuvB(12)-RuvC(2) complex forms which resolves the HJ.

The protein localises to the cytoplasm. The enzyme catalyses ATP + H2O = ADP + phosphate + H(+). Its function is as follows. The RuvA-RuvB-RuvC complex processes Holliday junction (HJ) DNA during genetic recombination and DNA repair, while the RuvA-RuvB complex plays an important role in the rescue of blocked DNA replication forks via replication fork reversal (RFR). RuvA specifically binds to HJ cruciform DNA, conferring on it an open structure. The RuvB hexamer acts as an ATP-dependent pump, pulling dsDNA into and through the RuvAB complex. RuvB forms 2 homohexamers on either side of HJ DNA bound by 1 or 2 RuvA tetramers; 4 subunits per hexamer contact DNA at a time. Coordinated motions by a converter formed by DNA-disengaged RuvB subunits stimulates ATP hydrolysis and nucleotide exchange. Immobilization of the converter enables RuvB to convert the ATP-contained energy into a lever motion, pulling 2 nucleotides of DNA out of the RuvA tetramer per ATP hydrolyzed, thus driving DNA branch migration. The RuvB motors rotate together with the DNA substrate, which together with the progressing nucleotide cycle form the mechanistic basis for DNA recombination by continuous HJ branch migration. Branch migration allows RuvC to scan DNA until it finds its consensus sequence, where it cleaves and resolves cruciform DNA. The sequence is that of Holliday junction branch migration complex subunit RuvB from Ehrlichia ruminantium (strain Gardel).